We begin with the raw amino-acid sequence, 101 residues long: Small ribosomal subunit protein uS14A (101 aa).

The segment at 31 to 74 (IRKPSTPEADRAAAQAALQRLPRDASPVRLRNRDAADGRPRGHL) is disordered. A compositionally biased stretch (basic and acidic residues) spans 61–70 (RNRDAADGRP).

It belongs to the universal ribosomal protein uS14 family. As to quaternary structure, part of the 30S ribosomal subunit. Contacts proteins S3 and S10.

Functionally, binds 16S rRNA, required for the assembly of 30S particles and may also be responsible for determining the conformation of the 16S rRNA at the A site. In Nocardia farcinica (strain IFM 10152), this protein is Small ribosomal subunit protein uS14A.